We begin with the raw amino-acid sequence, 205 residues long: Protein N-terminal glutamine amidohydrolase (205 aa).

Catalysis depends on residues Cys20, His74, and Asp90.

This sequence belongs to the NTAQ1 family. As to quaternary structure, monomer.

The enzyme catalyses N-terminal L-glutaminyl-[protein] + H2O = N-terminal L-glutamyl-[protein] + NH4(+). Functionally, mediates the side-chain deamidation of N-terminal glutamine residues to glutamate, an important step in N-end rule pathway of protein degradation. Conversion of the resulting N-terminal glutamine to glutamate renders the protein susceptible to arginylation, polyubiquitination and degradation as specified by the N-end rule. Does not act on substrates with internal or C-terminal glutamine and does not act on non-glutamine residues in any position. This is Protein N-terminal glutamine amidohydrolase (tun) from Drosophila grimshawi (Hawaiian fruit fly).